Here is a 437-residue protein sequence, read N- to C-terminus: Epsilon-sarcoglycan (437 aa).

Topologically, residues 1-317 (MQLPRWWELG…LKSRDYYTDF (317 aa)) are extracellular. A glycan (N-linked (GlcNAc...) asparagine) is linked at N200. Residues 318 to 338 (LITLAVPSAVALVLFLILAYI) traverse the membrane as a helical segment. The Cytoplasmic segment spans residues 339-437 (MCCRREGVEK…QQQTTGKWYP (99 aa)).

The protein belongs to the sarcoglycan alpha/epsilon family. N-glycosylated. In terms of processing, ubiquitinated, leading to its degradation by the proteasome.

The protein localises to the cell membrane. It localises to the sarcolemma. Its subcellular location is the cytoplasm. The protein resides in the cytoskeleton. It is found in the cell projection. The protein localises to the dendrite. It localises to the golgi apparatus. Component of the sarcoglycan complex, a subcomplex of the dystrophin-glycoprotein complex which forms a link between the F-actin cytoskeleton and the extracellular matrix. The protein is Epsilon-sarcoglycan of Macaca fascicularis (Crab-eating macaque).